Here is a 265-residue protein sequence, read N- to C-terminus: MRQPAVAGQFYPLRPDNLEKELKQCFEGLEIRERNILGAVCPHAGYVYSGRVAAHVYAVLPKADTYVLFGPNHTGYGSPVSVSTDTWKTPLGIIEVDRELAEGLTGSIVDVDEIGHRYEHSIEVQLPFLQYRFDQDFRILPICLGMQDEETVIEVGTLIANLVSKSGKKVAFIASSDFTHYQPANLARETDNEIIEAILNLDVPGIYERLYRRNASVCGYGPISAMLTASKKLGATRAELLNYSNSGEVSGDMNAVVGYAAIIVE.

The protein belongs to the MEMO1 family.

This Methanosarcina barkeri (strain Fusaro / DSM 804) protein is MEMO1 family protein Mbar_A1422.